Here is a 262-residue protein sequence, read N- to C-terminus: tRNA pseudouridine synthase A (262 aa).

The Nucleophile role is filled by Asp52. Tyr110 is a substrate binding site.

The protein belongs to the tRNA pseudouridine synthase TruA family. Homodimer.

The catalysed reaction is uridine(38/39/40) in tRNA = pseudouridine(38/39/40) in tRNA. In terms of biological role, formation of pseudouridine at positions 38, 39 and 40 in the anticodon stem and loop of transfer RNAs. The chain is tRNA pseudouridine synthase A from Chromobacterium violaceum (strain ATCC 12472 / DSM 30191 / JCM 1249 / CCUG 213 / NBRC 12614 / NCIMB 9131 / NCTC 9757 / MK).